An 890-amino-acid polypeptide reads, in one-letter code: DNA mismatch repair protein MutS (890 aa).

645 to 652 (GPNMAGKS) provides a ligand contact to ATP.

Belongs to the DNA mismatch repair MutS family.

Functionally, this protein is involved in the repair of mismatches in DNA. It is possible that it carries out the mismatch recognition step. This protein has a weak ATPase activity. The polypeptide is DNA mismatch repair protein MutS (Rickettsia rickettsii (strain Iowa)).